Reading from the N-terminus, the 384-residue chain is Secreted LysM effector LysM14 (384 aa).

The first 35 residues, Met-1–Ala-35, serve as a signal peptide directing secretion. Residues Tyr-64–Leu-112 enclose the LysM domain. The tract at residues Ser-185–Thr-220 is disordered.

This sequence belongs to the secreted LysM effector family.

The protein localises to the secreted. Functionally, secreted LysM effector that might have a role in sequestration of chitin oligosaccharides (breakdown products of fungal cell walls that are released during invasion and act as triggers of host immunity) to dampen host defense. The polypeptide is Secreted LysM effector LysM14 (Penicillium expansum (Blue mold rot fungus)).